Here is a 122-residue protein sequence, read N- to C-terminus: Small ribosomal subunit protein uS13 (122 aa).

Positions 97–122 (PVRGQRTHTNAKTRKGRSRLPIAGKK) are disordered.

Belongs to the universal ribosomal protein uS13 family. In terms of assembly, part of the 30S ribosomal subunit. Forms a loose heterodimer with protein S19. Forms two bridges to the 50S subunit in the 70S ribosome.

In terms of biological role, located at the top of the head of the 30S subunit, it contacts several helices of the 16S rRNA. In the 70S ribosome it contacts the 23S rRNA (bridge B1a) and protein L5 of the 50S subunit (bridge B1b), connecting the 2 subunits; these bridges are implicated in subunit movement. Contacts the tRNAs in the A and P-sites. The protein is Small ribosomal subunit protein uS13 of Wolbachia pipientis wMel.